Consider the following 473-residue polypeptide: Minor capsid protein L2 (473 aa).

The Nuclear localization signal motif lies at 1–12 (MVAHRARRRKRA). A disulfide bridge connects residues C21 and C27. The short motif at 452-462 (FVPRRRRRKRL) is the Nuclear localization signal element.

This sequence belongs to the papillomaviridae L2 protein family. In terms of assembly, interacts with major capsid protein L1. Interacts with E2; this interaction inhibits E2 transcriptional activity but not the DNA replication function E2. Interacts with host GADD45GIP1. Interacts with host HSPA8; this interaction is required for L2 nuclear translocation. Interacts with host importins KPNB2 and KPNB3. Forms a complex with importin alpha2-beta1 heterodimers via interaction with the importin alpha2 adapter. Interacts with host DYNLT1; this interaction is essential for virus intracellular transport during entry. Interacts (via C-terminus) with host retromer subunits VPS35 and VPS29. Highly phosphorylated.

It localises to the virion. Its subcellular location is the host nucleus. It is found in the host early endosome. The protein resides in the host Golgi apparatus. Its function is as follows. Minor protein of the capsid that localizes along the inner surface of the virion, within the central cavities beneath the L1 pentamers. Plays a role in capsid stabilization through interaction with the major capsid protein L1. Once the virion enters the host cell, L2 escorts the genomic DNA into the nucleus by promoting escape from the endosomal compartments and traffic through the host Golgi network. Mechanistically, the C-terminus of L2 possesses a cell-penetrating peptide that protudes from the host endosome, interacts with host cytoplasmic retromer cargo and thereby mediates the capsid delivery to the host trans-Golgi network. Plays a role through its interaction with host dynein in the intracellular microtubule-dependent transport of viral capsid toward the nucleus. Mediates the viral genome import into the nucleus through binding to host importins. Once within the nucleus, L2 localizes viral genomes to host PML bodies in order to activate early gene expression for establishment of infection. Later on, promotes late gene expression by interacting with the viral E2 protein and by inhibiting its transcriptional activation functions. During virion assembly, encapsidates the genome by direct interaction with the viral DNA. This Human papillomavirus 28 protein is Minor capsid protein L2.